The following is a 1844-amino-acid chain: MAFQLALDALAPTTHRDPSLHPILESTVDSIRSSIQTYPWSIPKELLPLLNSYGIPTSGLGTSHHPHAAHKTIETFLLCTHWSFQATTPSSVMFMKPSKFNKLAQVNSNFRELKNYRLHPNDSTRYPFTSPDLPVFPTIFMHDALMYYHPSQIMDLFLRKPNLERLYASLVVPPEAHLSDQSFYPKLYTYTTTRHTLHYVPEGHEAGSYNQPSDAHSWLRINSIRLGNHHLSVTILESWGPVHSLLIQRGTPPPDPSLQAPPTLMTSDLFRSYQEPRLDVVSFRIPDAIELPQATFLQQPLRDRLVPRAVYNALFTYTRAVRTLRTSDPAAFVRMHSSKPDHDWVTSNAWDNLQTFALLNVPLRPNVVYHVLQSPIASLSLYLRQHWRRLTATAVPILSFLTLLQRFLPLPIPLAEVKSITAFRRELYRKKEPHHPLDVFHLQHRVRNYHSAISAVRPASPPHQKLPHALQKAALLLLRPISPLLTATPFFRSEQKSMLPNAELSWTLKRFALPWQASLVLLALSESSILLHKLFSPPTLQAQHDTYHRHLHPGSYSLQWERTPLSIPRTTAFLPFTPTTSTAPPDRSEASLPPAFASTFVPRPPPAASSPGAQPPTTTAAPPTPIEPTQRTHQNSDLALESSTSTEPPPPPIRSPDMTPSAPVLFPEINSPRRFPPQLPATPDLEPAHTPPPLSIPHQDPTDSADPLMGSHLLHHSLPAPPTHPLPSSQLLPAPLTNDPTAIGPVLPFEELHPRRYPENTATFLTRLRSLPSNHLPQPTLNCLLSAVSDQTKVSEEHLWESLQTILPDSQLSNEETNTLGLSTEHLTALAHLYNFQATVYSDRGPILFGPSDTIKRIDITHTTGPPSHFSPGKRLLGSQPSAKGHPSDPLIRAMKSFKVSGNYLPFSEAHNHPTSISHAKNLISNMKNGFDGVLSLLDVSTGQRTGPTPKERIIQIDHYLDTNPGKTTPVVHFAGFAGCGKTYPIQQLLKTKLFKDFRVSCPTTELRTEWKTAMELHGSQSWRFNTWESSILKSSRILVIDEIYKMPRGYLDLSILADPALELVIILGDPLQGEYHSQSKDSSNHRLPSETLRLLPYIDMYCWWSYRIPQCIARLFQIHSFNAWQGVIGSVSTPHDQSPVLTNSHASSLTFNSLGYRSCTISSSQGLTFCDPAIIVLDNYTKWLSSANGLVALTRSRSGVQFMGPSSYVGGTNGSSAMFSDAFNNSLIIMDRYFPSLFPQLKLITSPLTTRGPKLNGATPSASPTHRSPNFHLPPHIPLSYDRDFVTVNPTLPDQGPETRLDTHFLPPSRLPLHFDLPPAITPPPVSTSVDPPQAKASPVYPGEFFDSLAAFFLPAHDPSTREILHKDQSSNQFPWFDRPFSLSCQPSSLISAKHAPNHDPTLLPASINKRLRFRPSDSPHQITADDVVLGLQLFHSLCRAYSRQPNSTVPFNPELFAECISLNEYAQLSSKTQSTIVANASRSDPDWRHTTVKIFAKAQHKVNDGSIFGSWKACQTLALMHDYVILVLGPVKKYQRIFDNADRPPNIYSHCGKTPNQLRDWCQEHLTHSTPKIANDYTAFDQSQHGESVVLEALKMKRLNIPSHLIQLHVHLKTNVSTQFGPLTCMRLTGEPGTYDDNTDYNLAVIYSQYDVGSCPIMVSGDDSLIDHPLPTRHDWPSVLKRLHLRFKLELTSHPLFCGYYVGPAGCIRNPLALFCKLMIAVDDDALDDRRLSYLTEFTTGHLLGESLWHLLPETHVQYQSACFDFFCRRCPRHEKMLLDDSTPALSLLERITSSPRWLTKNAMYLLPAKLRLAITSLSQTQSFPESIEVSHAESELLHYVQ.

In terms of domain architecture, Alphavirus-like MT spans 58–219 (SGLGTSHHPH…NQPSDAHSWL (162 aa)). The disordered stretch occupies residues 571 to 739 (TAFLPFTPTT…QLLPAPLTND (169 aa)). Low complexity-rich tracts occupy residues 609-621 (SSPG…TTAA) and 726-736 (LPSSQLLPAPL). The region spanning 728–879 (SSQLLPAPLT…FSPGKRLLGS (152 aa)) is the OTU domain. The Peptidase C21 domain maps to 730–884 (QLLPAPLTND…RLLGSQPSAK (155 aa)). The active-site For protease activity is cysteine 783. Positions 859-887 (DITHTTGPPSHFSPGKRLLGSQPSAKGHP) are disordered. Residues 865–867 (GPP) carry the GPP flap motif. The For protease activity role is filled by histidine 869. In terms of domain architecture, (+)RNA virus helicase ATP-binding spans 946–1103 (TGPTPKERII…RLLPYIDMYC (158 aa)). 976–983 (GFAGCGKT) contacts ATP. Residues 1104–1236 (WWSYRIPQCI…SLIIMDRYFP (133 aa)) enclose the (+)RNA virus helicase C-terminal domain. In terms of domain architecture, RdRp catalytic spans 1572–1678 (TPKIANDYTA…DHPLPTRHDW (107 aa)).

It belongs to the Tymoviridae non-structural replication polyprotein family. As to quaternary structure, interacts with host ubiquitin. Post-translationally, specific enzymatic cleavages by the host yield mature proteins.

Its subcellular location is the host chloroplast envelope. The catalysed reaction is Thiol-dependent hydrolysis of ester, thioester, amide, peptide and isopeptide bonds formed by the C-terminal Gly of ubiquitin (a 76-residue protein attached to proteins as an intracellular targeting signal).. The enzyme catalyses RNA(n) + a ribonucleoside 5'-triphosphate = RNA(n+1) + diphosphate. Its function is as follows. Acts as a cysteine protease, methyltransferase and deubiquitinase. The cysteine protease activity cleaves the polyprotein giving rise to mature proteins. The protease has the ability to process substrates in trans. The methyltransferase domain is probably involved in viral RNA capping. The deubiquitylating activity counteracts the degradation of the viral polymerase mediated by the host ubiquitin-proteasome system. The polymerase is thus stabilized and infectivity is increased. Favors K63 poly-Ub linkage. Functionally, RNA-directed RNA polymerase is responsible for the replication and transcription of the genome. The polypeptide is Non-structural replication polyprotein (Turnip yellow mosaic virus).